The following is a 218-amino-acid chain: Probable GTP-binding protein EngB (218 aa).

One can recognise an EngB-type G domain in the interval 23-200 (EVPEIAFVGR…AQLLWQWAHP (178 aa)). Residues 31 to 38 (GRSNAGKS), 58 to 62 (GRTQH), 80 to 83 (DLPG), 150 to 153 (TKAD), and 179 to 181 (FSA) each bind GTP. Mg(2+) is bound by residues Ser-38 and Thr-60.

This sequence belongs to the TRAFAC class TrmE-Era-EngA-EngB-Septin-like GTPase superfamily. EngB GTPase family. Requires Mg(2+) as cofactor.

Its function is as follows. Necessary for normal cell division and for the maintenance of normal septation. In Acidovorax ebreus (strain TPSY) (Diaphorobacter sp. (strain TPSY)), this protein is Probable GTP-binding protein EngB.